Consider the following 3164-residue polypeptide: Large tegument protein deneddylase (3164 aa).

Residues 1–273 are deubiquitination activity; it reads MGGGNNTNPG…SETYLQDEAF (273 aa). A Peptidase C76 domain is found at 45 to 263; sequence VVTGARNQFA…TAAALHLYGA (219 aa). Active-site residues include cysteine 65, aspartate 197, and histidine 199. Positions 289–508 are disordered; that stretch reads AGLGEPCVGV…GEDDGPTVPA (220 aa). Residues 308–321 show a composition bias toward pro residues; the sequence is GPHPPTAAQSPPPT. Residues 343–353 are compositionally biased toward basic and acidic residues; sequence PEAKRPNRAPD. A compositionally biased stretch (pro residues) spans 365–390; the sequence is PTDPPSADPPSADPPSAIPPPPPSAP. Residues 416 to 432 are compositionally biased toward basic residues; that stretch reads GRHRARYSAGLPKRRRP. The nuclear localization signal stretch occupies residues 426 to 432; sequence LPKRRRP. The interaction with inner tegument protein stretch occupies residues 579 to 609; that stretch reads LELCVIFFFERVLAFLIENGARTHTQAGVAG. An interaction with UL37 region spans residues 579 to 609; it reads LELCVIFFFERVLAFLIENGARTHTQAGVAG. Disordered regions lie at residues 2296–2318, 2518–2552, and 2583–3020; these read QTLSPSGGREASPPAPPNALYRP, HPVYQRAPDDQSPSVPNPTPGPVDLVGAEGSLGPG, and ASDD…SLSG. The segment covering 2653-2667 has biased composition (pro residues); sequence QSSPAPPDATAPRPP. The span at 2668-2680 shows a compositional bias: low complexity; that stretch reads ASSRASAASSSGS. Residues 2681 to 2690 are compositionally biased toward basic residues; that stretch reads RARRHRRARS. Residues 2722 to 2732 are compositionally biased toward pro residues; that stretch reads PPAPPKPPEPA. Over residues 2834-2843 the composition is skewed to low complexity; that stretch reads PAEPTSSSPA. The segment covering 2844–2866 has biased composition (pro residues); sequence GPSPPPPAVQPVAPPPTSGPPPT. Polar residues predominate over residues 2886 to 2897; it reads TRQPVATPTTSA. A run of 35 repeats spans residues 2911-2912, 2913-2914, 2915-2916, 2917-2918, 2919-2920, 2921-2922, 2923-2924, 2925-2926, 2927-2928, 2929-2930, 2931-2932, 2933-2934, 2935-2936, 2937-2938, 2939-2940, 2941-2942, 2943-2944, 2945-2946, 2947-2948, 2949-2950, 2951-2952, 2953-2954, 2955-2956, 2957-2958, 2959-2960, 2961-2962, 2963-2964, 2965-2966, 2967-2968, 2969-2970, 2971-2972, 2973-2974, 2975-2976, 2977-2978, and 2979-2980. Residues 2911–2980 form a 35 X 2 AA tandem repeats of P-Q region; the sequence is PQPQPQPQPQ…PQPQPQPQPQ (70 aa). Pro residues predominate over residues 2912–2978; the sequence is QPQPQPQPQP…PQPQPQPQPQ (67 aa). Residues 2999 to 3014 show a composition bias toward polar residues; sequence NRPSVPASASSTNPRT.

Belongs to the herpesviridae large tegument protein family. In terms of assembly, interacts with host CUL1 and CUL4A; these interactions inhibit the E3 ligase activity of cullins. Interacts with inner tegument protein. Interacts with capsid vertex specific component CVC2. Interacts with the major capsid protein/MCP. Interacts with VP16; this interaction is important for outer tegument association to the capsid. May form homodimers. Post-translationally, proteolytically processed, possibly into several polypeptides. Enzymatic activity is only detectable following cleavage of the UL36 protein, which occurs late during viral replication.

It localises to the virion tegument. The protein localises to the host cytoplasm. Its subcellular location is the host nucleus. The enzyme catalyses Thiol-dependent hydrolysis of ester, thioester, amide, peptide and isopeptide bonds formed by the C-terminal Gly of ubiquitin (a 76-residue protein attached to proteins as an intracellular targeting signal).. Functionally, large tegument protein that plays multiple roles in the viral cycle. During viral entry, remains associated with the capsid while most of the tegument is detached and participates in the capsid transport toward the host nucleus. Plays a role in the routing of the capsid at the nuclear pore complex and subsequent uncoating. Within the host nucleus, acts as a deneddylase and promotes the degradation of nuclear CRLs (cullin-RING ubiquitin ligases) and thereby stabilizes nuclear CRL substrates, while cytoplasmic CRLs remain unaffected. These modifications prevent host cell cycle S-phase progression and create a favorable environment allowing efficient viral genome replication. Participates later in the secondary envelopment of capsids. Indeed, plays a linker role for the association of the outer viral tegument to the capsids together with the inner tegument protein. The sequence is that of Large tegument protein deneddylase from Human herpesvirus 1 (strain 17) (HHV-1).